The sequence spans 192 residues: Bifunctional protein PyrR (192 aa).

Substrate contacts are provided by residues 49 to 50 (SG), Arg90, 111 to 119 (DDVLFSGRT), Arg144, and Val168. The PRPP-binding signature appears at 107-119 (VILVDDVLFSGRT).

It belongs to the purine/pyrimidine phosphoribosyltransferase family. PyrR subfamily.

It catalyses the reaction UMP + diphosphate = 5-phospho-alpha-D-ribose 1-diphosphate + uracil. In terms of biological role, regulates the transcription of the pyrimidine nucleotide (pyr) operon in response to exogenous pyrimidines. Its function is as follows. Also displays a weak uracil phosphoribosyltransferase activity which is not physiologically significant. The sequence is that of Bifunctional protein PyrR from Corynebacterium glutamicum (strain ATCC 13032 / DSM 20300 / JCM 1318 / BCRC 11384 / CCUG 27702 / LMG 3730 / NBRC 12168 / NCIMB 10025 / NRRL B-2784 / 534).